The sequence spans 232 residues: Response regulator MprA (232 aa).

The Response regulatory domain maps to 4–118; it reads RILVVDDDRA…ELLARMRALL (115 aa). Aspartate 48 carries the 4-aspartylphosphate modification. Residues 131–229 constitute a DNA-binding region (ompR/PhoB-type); the sequence is SVAMTFSDLS…VRGVGYVLRE (99 aa).

In terms of processing, phosphorylated and dephosphorylated by MprB.

The protein resides in the cytoplasm. Functionally, member of the two-component regulatory system MprB/MprA which contributes to maintaining a balance among several systems involved in stress resistance and is required for establishment and maintenance of persistent infection in the host. Functions as a transcriptional regulator that recognizes a 19-bp nucleotide motif comprizing two loosely conserved 8-bp direct DNA-binding motif repeats separated by a 3-bp spacer region. This chain is Response regulator MprA (mprA), found in Mycobacterium ulcerans (strain Agy99).